The following is a 616-amino-acid chain: FNIP repeat-containing protein DDB_G0290639 (616 aa).

A coiled-coil region spans residues 239–274; that stretch reads FENNNNNNNNNNNNNNNNNNNNNNNNNNNNNKKTEK. Positions 241–269 are enriched in low complexity; the sequence is NNNNNNNNNNNNNNNNNNNNNNNNNNNNN. Positions 241 to 270 are disordered; it reads NNNNNNNNNNNNNNNNNNNNNNNNNNNNNK. 6 FNIP repeats span residues 337–379, 380–421, 423–464, 466–508, 509–550, and 552–593; these read FEES…FNDG, FNQS…KLCN, FSQP…VFYD, FNQL…FSDG, FNQT…LIDS, and FQQP…ILDK.

The chain is FNIP repeat-containing protein DDB_G0290639 from Dictyostelium discoideum (Social amoeba).